Reading from the N-terminus, the 265-residue chain is Glutamate racemase (265 aa).

Substrate-binding positions include 12-13 (DS) and 44-45 (YG). Cysteine 75 acts as the Proton donor/acceptor in catalysis. 76-77 (NT) lines the substrate pocket. Cysteine 186 serves as the catalytic Proton donor/acceptor. Position 187–188 (187–188 (TH)) interacts with substrate.

Belongs to the aspartate/glutamate racemases family.

The enzyme catalyses L-glutamate = D-glutamate. Its pathway is cell wall biogenesis; peptidoglycan biosynthesis. Its function is as follows. Provides the (R)-glutamate required for cell wall biosynthesis. This is Glutamate racemase from Pseudomonas paraeruginosa (strain DSM 24068 / PA7) (Pseudomonas aeruginosa (strain PA7)).